We begin with the raw amino-acid sequence, 316 residues long: Cation efflux system protein CzcD (316 aa).

Helical transmembrane passes span 17–37 (LKIA…GGVM), 47–67 (AAHM…IAIA), 82–102 (FEIL…IYIL), 115–135 (IEST…LISM), 152–172 (YLEV…AIII), and 174–194 (FTGW…WVLP).

Belongs to the cation diffusion facilitator (CDF) transporter (TC 2.A.4) family. SLC30A subfamily.

It localises to the cell membrane. In terms of biological role, necessary for activation of the czc determinant. This Alcaligenes sp. (strain CT14) protein is Cation efflux system protein CzcD (czcD).